Here is a 135-residue protein sequence, read N- to C-terminus: Sex-regulated protein janus-A (135 aa).

Substrate is bound at residue K37. The active-site Proton acceptor is the H63. 104-106 (SQG) contributes to the substrate binding site.

This sequence belongs to the janus family.

JanA and janB regulate somatic sex differentiation. The sequence is that of Sex-regulated protein janus-A (janA) from Drosophila simulans (Fruit fly).